We begin with the raw amino-acid sequence, 253 residues long: Shikimate dehydrogenase (253 aa).

Lys-63 serves as the catalytic Proton acceptor. 115-119 (GAGGA) contacts NADP(+).

It belongs to the shikimate dehydrogenase family.

It catalyses the reaction shikimate + NADP(+) = 3-dehydroshikimate + NADPH + H(+). The protein operates within metabolic intermediate biosynthesis; chorismate biosynthesis; chorismate from D-erythrose 4-phosphate and phosphoenolpyruvate: step 4/7. The sequence is that of Shikimate dehydrogenase (aroE) from Thermotoga neapolitana (strain ATCC 49049 / DSM 4359 / NBRC 107923 / NS-E).